A 337-amino-acid chain; its full sequence is GTPase Obg (337 aa).

The region spanning 4–162 (SNFVDYAKIH…RQIVFQLKLL (159 aa)) is the Obg domain. Residues 163–329 (ADVGLVGFPN…LKDLLWEKLR (167 aa)) enclose the OBG-type G domain. GTP contacts are provided by residues 169-176 (GFPNTGKS), 194-198 (FTTLE), 216-219 (DIPG), 283-286 (SKSD), and 310-312 (SSF). Mg(2+) contacts are provided by serine 176 and threonine 196.

Belongs to the TRAFAC class OBG-HflX-like GTPase superfamily. OBG GTPase family. Monomer. Requires Mg(2+) as cofactor.

It is found in the cytoplasm. Functionally, an essential GTPase which binds GTP, GDP and possibly (p)ppGpp with moderate affinity, with high nucleotide exchange rates and a fairly low GTP hydrolysis rate. Plays a role in control of the cell cycle, stress response, ribosome biogenesis and in those bacteria that undergo differentiation, in morphogenesis control. In Azobacteroides pseudotrichonymphae genomovar. CFP2, this protein is GTPase Obg.